The chain runs to 440 residues: Chromosomal replication initiator protein DnaA (440 aa).

The segment at 1–74 (MNPSQILENL…VQSGNKAIIN (74 aa)) is domain I, interacts with DnaA modulators. The interval 74–99 (NIQAQSAKQSNKSTKIDIAHIKAQST) is domain II. Positions 100–316 (ILNPSFTFDS…GIIISLNAYA (217 aa)) are domain III, AAA+ region. Positions 146, 148, 149, and 150 each coordinate ATP. A domain IV, binds dsDNA region spans residues 317–440 (TILGQEITLE…KNKILVKSQS (124 aa)).

This sequence belongs to the DnaA family. In terms of assembly, oligomerizes as a right-handed, spiral filament on DNA at oriC.

It is found in the cytoplasm. Its function is as follows. Plays an essential role in the initiation and regulation of chromosomal replication. ATP-DnaA binds to the origin of replication (oriC) to initiate formation of the DNA replication initiation complex once per cell cycle. Binds the DnaA box (a 9 base pair repeat at the origin) and separates the double-stranded (ds)DNA. Forms a right-handed helical filament on oriC DNA; dsDNA binds to the exterior of the filament while single-stranded (ss)DNA is stabiized in the filament's interior. The ATP-DnaA-oriC complex binds and stabilizes one strand of the AT-rich DNA unwinding element (DUE), permitting loading of DNA polymerase. After initiation quickly degrades to an ADP-DnaA complex that is not apt for DNA replication. Binds acidic phospholipids. The chain is Chromosomal replication initiator protein DnaA from Campylobacter jejuni (strain RM1221).